We begin with the raw amino-acid sequence, 157 residues long: MQLTVKALQGRECSLQVPEDELVSTLKQLVSEKLNVPVRQQRLLFKGKALADGKRLSDYSIGPNSKLNLVVKPLEKVLLEEGAGRRLADSPPTQVWQLISKVLARHFSAADASRVLEQLQRDYQRSLSRLTLDDIERLASRFLHPEVTETMEKGFSK.

Residues 1–76 enclose the Ubiquitin-like domain; the sequence is MQLTVKALQG…LNLVVKPLEK (76 aa). Lys48 is covalently cross-linked (Glycyl lysine isopeptide (Lys-Gly) (interchain with G-Cter in ubiquitin)). Ser90 bears the Phosphoserine mark. The required and sufficient for interaction with BAG6 stretch occupies residues 96–138; that stretch reads WQLISKVLARHFSAADASRVLEQLQRDYQRSLSRLTLDDIERL.

As to quaternary structure, component of the BAG6/BAT3 complex, at least composed of BAG6, UBL4A and GET4/TRC35. Interacts with BAG6; the interaction is direct and required for UBL4A protein stability. Interacts with USP13; may be indirect via BAG6. Polyubiquitinated. Ubiquitination by AMFR and deubiquitination by USP13 may regulate the interaction between the BAG6/BAT complex and SGTA and therefore may regulate client proteins fate.

The protein localises to the cytoplasm. It is found in the cytosol. The protein resides in the nucleus. In terms of biological role, as part of a cytosolic protein quality control complex, the BAG6/BAT3 complex, maintains misfolded and hydrophobic patches-containing proteins in a soluble state and participates in their proper delivery to the endoplasmic reticulum or alternatively can promote their sorting to the proteasome where they undergo degradation. The BAG6/BAT3 complex is involved in the post-translational delivery of tail-anchored/type II transmembrane proteins to the endoplasmic reticulum membrane. Recruited to ribosomes, it interacts with the transmembrane region of newly synthesized tail-anchored proteins and together with SGTA and ASNA1 mediates their delivery to the endoplasmic reticulum. Client proteins that cannot be properly delivered to the endoplasmic reticulum are ubiquitinated and sorted to the proteasome. Similarly, the BAG6/BAT3 complex also functions as a sorting platform for proteins of the secretory pathway that are mislocalized to the cytosol either delivering them to the proteasome for degradation or to the endoplasmic reticulum. The BAG6/BAT3 complex also plays a role in the endoplasmic reticulum-associated degradation (ERAD), a quality control mechanism that eliminates unwanted proteins of the endoplasmic reticulum through their retrotranslocation to the cytosol and their targeting to the proteasome. It maintains these retrotranslocated proteins in an unfolded yet soluble state condition in the cytosol to ensure their proper delivery to the proteasome. This Plecturocebus moloch (Dusky titi monkey) protein is Ubiquitin-like protein 4A (UBL4A).